Consider the following 62-residue polypeptide: Large ribosomal subunit protein uL29 (62 aa).

Belongs to the universal ribosomal protein uL29 family.

The polypeptide is Large ribosomal subunit protein uL29 (Acholeplasma laidlawii (strain PG-8A)).